Here is a 442-residue protein sequence, read N- to C-terminus: QWRF motif-containing protein 6 (442 aa).

Disordered stretches follow at residues 1–144 and 221–240; these read MEAK…LSQQ and FSRL…ADTK. A compositionally biased stretch (basic residues) spans 57-66; sequence KQHHLQHHQI. Over residues 80–89 the composition is skewed to basic and acidic residues; that stretch reads KMADGDENRS. The short motif at 264-267 is the QWRF motif element; it reads QWRF.

It belongs to the QWRF family.

The polypeptide is QWRF motif-containing protein 6 (QWRF6) (Arabidopsis thaliana (Mouse-ear cress)).